A 248-amino-acid chain; its full sequence is MKTYVFIPARYGSSRLPGKPLKLINGKPMIQHVFERISKATGIEAVYVATDDDRIKEVVEKFGGNVVMTPPEAESGTDRIAQAAQALDLKEDDLIVNVQGDQPLVNQGSIEAVIAPFKAADYDGSFEMSTLSFKIVNEAEITSPKDVKLVTDVNGFALYFSRATIPHGRDYWDHDSYKHLGVYAYTKRFVDLFNTLPMGHLEDIEKLEQLRALEYGHKIKVVESEWDSPEVDLPGDIEMMEALLNAGH.

This sequence belongs to the KdsB family.

Its subcellular location is the cytoplasm. It catalyses the reaction 3-deoxy-alpha-D-manno-oct-2-ulosonate + CTP = CMP-3-deoxy-beta-D-manno-octulosonate + diphosphate. It participates in nucleotide-sugar biosynthesis; CMP-3-deoxy-D-manno-octulosonate biosynthesis; CMP-3-deoxy-D-manno-octulosonate from 3-deoxy-D-manno-octulosonate and CTP: step 1/1. Its pathway is bacterial outer membrane biogenesis; lipopolysaccharide biosynthesis. In terms of biological role, activates KDO (a required 8-carbon sugar) for incorporation into bacterial lipopolysaccharide in Gram-negative bacteria. This chain is 3-deoxy-manno-octulosonate cytidylyltransferase 2, found in Hydrogenovibrio crunogenus (strain DSM 25203 / XCL-2) (Thiomicrospira crunogena).